The chain runs to 162 residues: UPF0262 protein Pden_1958 (162 aa).

Residues 1–22 (MSQSANRLCRIDIDDSALPPPS) are disordered.

Belongs to the UPF0262 family.

In Paracoccus denitrificans (strain Pd 1222), this protein is UPF0262 protein Pden_1958.